We begin with the raw amino-acid sequence, 457 residues long: MFTIKKLTLTIVVATTLTGCANIGDSYRASLKNYKQYEEITKQYNIKNDWWKLYKDAQLNRVVEKALLNNKDLAKATISVNRALYSANLAGANLVPAFSGSTRSTAQKNIKTGGNSTISHTGSLNVSYTLDLWFRLADTADAAEWAHKATVQDMESTKLSLINSVVTTYYQIAYLNDAISTTKESIKYYTDISNIMRNRLAQGVADSISVDQAQQAVLTARNNLITYQLNRKTAEQTLRNLLNLKPDETLKITFPHILKVKSVGVNLNVPVSVIANRPDIKGYQARLSSAFKNVKATEKSWFPEITLGGSLNSSGKKLNSATNTLIGGGALGISLPFLNWNTVKWNVKISEADYETARLNYEKSITVALNDVDTNYFSFTQAKKRFTNAQKTYIYNQRITQYYRNRYNAGVSELREWLTAANTEKNSQLSILQAKYNVIQAENAVYSSMAGYYSVKK.

A signal peptide spans 1 to 23 (MFTIKKLTLTIVVATTLTGCANI).

This sequence belongs to the outer membrane factor (OMF) (TC 1.B.17) family. Homotrimer. Probably part of a complex composed of LtxB, LtxD and TdeA, which forms a single transport channel across the two membranes.

The protein resides in the cell outer membrane. In terms of biological role, required for secretion of the LtxA leukotoxin and resistance to various antimicrobial compounds. The polypeptide is Toxin and drug export protein A (Aggregatibacter actinomycetemcomitans (Actinobacillus actinomycetemcomitans)).